The sequence spans 57 residues: Preprotein translocase subunit SecG (57 aa).

Residues 1-33 (MARRRKYEGLNPFVAAGLIKFSEEGELERIKLN) are Cytoplasmic-facing. A helical membrane pass occupies residues 34–55 (PRTAILVSITVIIAILVLNILH). The Extracellular segment spans residues 56 to 57 (PL).

This sequence belongs to the SEC61-beta family. Component of the protein translocase complex. Heterotrimer consisting of alpha (SecY), beta (SecG) and gamma (SecE) subunits. Can form oligomers of the heterotrimer.

The protein localises to the cell membrane. Involved in protein export. The function of the beta subunit is unknown, but it may be involved in stabilization of the trimeric complex. The sequence is that of Preprotein translocase subunit SecG from Pyrobaculum islandicum (strain DSM 4184 / JCM 9189 / GEO3).